Consider the following 230-residue polypeptide: Octanoyltransferase (230 aa).

Residues 38-215 (AGGADTLLLL…AVCAALDGVL (178 aa)) form the BPL/LPL catalytic domain. Substrate-binding positions include 76-83 (RGGKITWH), 145-147 (AIG), and 158-160 (GFA). Cysteine 176 (acyl-thioester intermediate) is an active-site residue.

It belongs to the LipB family.

The protein localises to the cytoplasm. It catalyses the reaction octanoyl-[ACP] + L-lysyl-[protein] = N(6)-octanoyl-L-lysyl-[protein] + holo-[ACP] + H(+). Its pathway is protein modification; protein lipoylation via endogenous pathway; protein N(6)-(lipoyl)lysine from octanoyl-[acyl-carrier-protein]: step 1/2. Its function is as follows. Catalyzes the transfer of endogenously produced octanoic acid from octanoyl-acyl-carrier-protein onto the lipoyl domains of lipoate-dependent enzymes. Lipoyl-ACP can also act as a substrate although octanoyl-ACP is likely to be the physiological substrate. This Mycobacterium tuberculosis (strain ATCC 25177 / H37Ra) protein is Octanoyltransferase.